Here is a 227-residue protein sequence, read N- to C-terminus: Glutathione S-transferase U17 (227 aa).

Residues 4–83 (SDVKLIGAWA…YIDDTWSSSG (80 aa)) enclose the GST N-terminal domain. Glutathione-binding positions include 14 to 15 (SP), 40 to 41 (SK), 54 to 55 (KI), and 67 to 68 (ES). The 133-residue stretch at 90 to 222 (DPYDRAMARF…KLAEFAKKIF (133 aa)) folds into the GST C-terminal domain.

Belongs to the GST superfamily. Tau family.

The protein localises to the cytoplasm. Its subcellular location is the cytosol. The enzyme catalyses RX + glutathione = an S-substituted glutathione + a halide anion + H(+). Involved in light signaling, mainly phyA-mediated photomorphogenesis and in the integration of various phytohormone signals to modulate various aspects of plant development by affecting glutathione pools. In vitro, possesses glutathione S-transferase activity toward 1-chloro-2,4-dinitrobenzene (CDNB) and benzyl isothiocyanate (BITC). The sequence is that of Glutathione S-transferase U17 (GSTU17) from Arabidopsis thaliana (Mouse-ear cress).